An 85-amino-acid chain; its full sequence is Alpha-conotoxin Lt28.1 (85 aa).

The signal sequence occupies residues 1–21; it reads MPKLEMMLLVLLILPLCYIDA. A propeptide spanning residues 22–40 is cleaved from the precursor; the sequence is VGPPPPWNMEDEIIEHWQK. Intrachain disulfides connect Cys61-Cys74, Cys66-Cys84, Cys67-Cys79, and Cys72-Cys81.

It belongs to the conotoxin D superfamily. In terms of tissue distribution, expressed by the venom duct.

It is found in the secreted. Its function is as follows. Alpha-conotoxins act on postsynaptic membranes, they bind to the nicotinic acetylcholine receptors (nAChR) and thus inhibit them. This toxin weakly inhibits alpha-9-alpha-10/CHRNA9-CHRNA10 nAChRs (IC(50)=3 uM). The chain is Alpha-conotoxin Lt28.1 from Conus litteratus (Lettered cone).